A 161-amino-acid chain; its full sequence is 6,7-dimethyl-8-ribityllumazine synthase (161 aa).

Residues W26, 58–60 (AFE), and 81–83 (VVI) each bind 5-amino-6-(D-ribitylamino)uracil. Position 86–87 (86–87 (GT)) interacts with (2S)-2-hydroxy-3-oxobutyl phosphate. The active-site Proton donor is H89. F114 serves as a coordination point for 5-amino-6-(D-ribitylamino)uracil. R128 contacts (2S)-2-hydroxy-3-oxobutyl phosphate.

Belongs to the DMRL synthase family.

The catalysed reaction is (2S)-2-hydroxy-3-oxobutyl phosphate + 5-amino-6-(D-ribitylamino)uracil = 6,7-dimethyl-8-(1-D-ribityl)lumazine + phosphate + 2 H2O + H(+). It functions in the pathway cofactor biosynthesis; riboflavin biosynthesis; riboflavin from 2-hydroxy-3-oxobutyl phosphate and 5-amino-6-(D-ribitylamino)uracil: step 1/2. Catalyzes the formation of 6,7-dimethyl-8-ribityllumazine by condensation of 5-amino-6-(D-ribitylamino)uracil with 3,4-dihydroxy-2-butanone 4-phosphate. This is the penultimate step in the biosynthesis of riboflavin. The polypeptide is 6,7-dimethyl-8-ribityllumazine synthase (Nocardioides sp. (strain ATCC BAA-499 / JS614)).